Reading from the N-terminus, the 213-residue chain is Cytidylate kinase (213 aa).

7–15 (GPAASGKGT) is a binding site for ATP.

The protein belongs to the cytidylate kinase family. Type 1 subfamily.

The protein localises to the cytoplasm. The enzyme catalyses CMP + ATP = CDP + ADP. It catalyses the reaction dCMP + ATP = dCDP + ADP. This is Cytidylate kinase from Rhodospirillum rubrum (strain ATCC 11170 / ATH 1.1.1 / DSM 467 / LMG 4362 / NCIMB 8255 / S1).